Here is a 387-residue protein sequence, read N- to C-terminus: 3-hydroxyisobutyryl-CoA hydrolase-like protein 5 (387 aa).

Alanine 2 bears the N-acetylalanine mark.

This sequence belongs to the enoyl-CoA hydratase/isomerase family.

The polypeptide is 3-hydroxyisobutyryl-CoA hydrolase-like protein 5 (Arabidopsis thaliana (Mouse-ear cress)).